We begin with the raw amino-acid sequence, 90 residues long: Small ribosomal subunit protein uS17m (90 aa).

This sequence belongs to the universal ribosomal protein uS17 family. As to quaternary structure, component of the mitochondrial small ribosomal subunit (mt-SSU). Mature yeast 74S mitochondrial ribosomes consist of a small (37S) and a large (54S) subunit. The 37S small subunit contains a 15S ribosomal RNA (15S mt-rRNA) and at least 32 different proteins. The 54S large subunit contains a 21S rRNA (21S mt-rRNA) and at least 45 different proteins.

Its subcellular location is the mitochondrion. In terms of biological role, component of the mitochondrial ribosome (mitoribosome), a dedicated translation machinery responsible for the synthesis of mitochondrial genome-encoded proteins, including at least some of the essential transmembrane subunits of the mitochondrial respiratory chain. The mitoribosomes are attached to the mitochondrial inner membrane and translation products are cotranslationally integrated into the membrane. uS17m may have a meiosis-specific role as it accumulates during the middle stage of sporulation. This is Small ribosomal subunit protein uS17m from Schizosaccharomyces pombe (strain 972 / ATCC 24843) (Fission yeast).